The primary structure comprises 805 residues: Sucrose synthase (805 aa).

The segment at 275–752 is GT-B glycosyltransferase; sequence MVFNVVILSP…GLKRIQEKYT (478 aa).

Belongs to the glycosyltransferase 1 family. Plant sucrose synthase subfamily.

It catalyses the reaction an NDP-alpha-D-glucose + D-fructose = a ribonucleoside 5'-diphosphate + sucrose + H(+). Functionally, sucrose-cleaving enzyme that provides UDP-glucose and fructose for various metabolic pathways. This Solanum tuberosum (Potato) protein is Sucrose synthase.